Consider the following 67-residue polypeptide: DNA gyrase inhibitor YacG (67 aa).

Residues Cys-9, Cys-12, Cys-28, and Cys-32 each contribute to the Zn(2+) site. Residues 46 to 67 (RIPSSGDLNDSDDWSEQPLDRQ) form a disordered region.

The protein belongs to the DNA gyrase inhibitor YacG family. In terms of assembly, interacts with GyrB. Requires Zn(2+) as cofactor.

In terms of biological role, inhibits all the catalytic activities of DNA gyrase by preventing its interaction with DNA. Acts by binding directly to the C-terminal domain of GyrB, which probably disrupts DNA binding by the gyrase. This is DNA gyrase inhibitor YacG from Erwinia tasmaniensis (strain DSM 17950 / CFBP 7177 / CIP 109463 / NCPPB 4357 / Et1/99).